Here is a 272-residue protein sequence, read N- to C-terminus: MQSKPGRENEEEVNNHHAVQQPMMYAEPWWKNNSFGVVPQARPSGIPSNSSSLDCPNGSESNDVHSASEDGALNGENDGTWKDSQAATSSRSVDNHGMEGNDPALSIRNMHDQPLVQPPELVGHYIACVPNPYQDPYYGGLMGAYGHQQLGFRPYLGMPRERTALPLDMAQEPVYVNAKQYEGILRRRKARAKAELERKVIRDRKPYLHESRHKHAMRRARASGGRFAKKSEVEAGEDAGGRDRERGSATNSSGSEQVETDSNETLNSSGAP.

2 disordered regions span residues Met-1 to Gln-20 and Ser-34 to Ser-106. 2 stretches are compositionally biased toward polar residues: residues Ile-46–Ser-61 and Lys-82–Ser-92. The Subunit association domain (SAD) signature appears at Tyr-175–Arg-198. The segment at residues Lys-205–Lys-230 is a DNA-binding region (NFYA/HAP2-type). Residues Pro-206 to Pro-272 form a disordered region. The segment covering Ser-211 to Arg-221 has biased composition (basic residues). The segment covering Lys-229–Gly-247 has biased composition (basic and acidic residues). Composition is skewed to polar residues over residues Ser-248–Gln-257 and Asn-263–Pro-272.

It belongs to the NFYA/HAP2 subunit family. In terms of assembly, heterotrimeric transcription factor composed of three components, NF-YA, NF-YB and NF-YC. NF-YB and NF-YC must interact and dimerize for NF-YA association and DNA binding. In terms of tissue distribution, ubiquitous.

Its subcellular location is the nucleus. Stimulates the transcription of various genes by recognizing and binding to a CCAAT motif in promoters. This is Nuclear transcription factor Y subunit A-1 (NFYA1) from Arabidopsis thaliana (Mouse-ear cress).